The sequence spans 1390 residues: Hepatocyte growth factor receptor (1390 aa).

The signal sequence occupies residues 1–24; it reads MKAPAVLAPGILVLLFTLVQRSNG. Over 25-932 the chain is Extracellular; it reads ECKEALAKSE…VIVQPDQNFT (908 aa). A Sema domain is found at 27 to 515; sequence KEALAKSEMN…TGKKITKIPL (489 aa). Asparagine 45 is a glycosylation site (N-linked (GlcNAc...) asparagine). 4 cysteine pairs are disulfide-bonded: cysteine 95-cysteine 101, cysteine 98-cysteine 160, cysteine 133-cysteine 141, and cysteine 172-cysteine 175. Asparagine 106 carries N-linked (GlcNAc...) asparagine glycosylation. N-linked (GlcNAc...) asparagine glycosylation is present at asparagine 149. An N-linked (GlcNAc...) asparagine glycan is attached at asparagine 202. Disulfide bonds link cysteine 298/cysteine 363 and cysteine 385/cysteine 397. 2 N-linked (GlcNAc...) asparagine glycosylation sites follow: asparagine 399 and asparagine 405. Cystine bridges form between cysteine 520–cysteine 538, cysteine 526–cysteine 561, cysteine 529–cysteine 545, and cysteine 541–cysteine 551. 3 IPT/TIG domains span residues 563–655, 657–739, and 742–836; these read PAIY…FSYV, PVIT…FSYR, and PIVY…LIYV. Residue threonine 582 is glycosylated (O-linked (Man) threonine). Residue asparagine 607 is glycosylated (N-linked (GlcNAc...) asparagine). Cysteines 610 and 624 form a disulfide. The N-linked (GlcNAc...) asparagine glycan is linked to asparagine 635. Threonine 676 is a glycosylation site (O-linked (Man) threonine). Cysteine 697 and cysteine 709 form a disulfide bridge. Threonine 761 carries O-linked (Man) threonine glycosylation. N-linked (GlcNAc...) asparagine glycosylation is found at asparagine 785, asparagine 879, and asparagine 930. Residues 933 to 955 form a helical membrane-spanning segment; the sequence is GLIAGVVSISTALLLLLGFFLWL. Residues 956–1390 lie on the Cytoplasmic side of the membrane; sequence KKRKQIKDLG…TRPASFWETS (435 aa). Position 966 is a phosphoserine (serine 966). Threonine 977 is modified (phosphothreonine). Phosphoserine is present on residues serine 990, serine 997, and serine 1000. The residue at position 1003 (tyrosine 1003) is a Phosphotyrosine. Residues 1078 to 1345 form the Protein kinase domain; sequence VHFNEVIGRG…RISAIFSTFI (268 aa). Residues 1084–1092 and lysine 1110 contribute to the ATP site; that span reads IGRGHFGCV. Aspartate 1204 acts as the Proton acceptor in catalysis. The segment at 1212 to 1390 is interaction with RANBP9; sequence LDEKFTVKVA…TRPASFWETS (179 aa). Tyrosine 1230 is modified (phosphotyrosine). Tyrosine 1234 and tyrosine 1235 each carry phosphotyrosine; by autocatalysis. Position 1289 is a phosphothreonine (threonine 1289). The segment at 1320-1359 is interaction with MUC20; that stretch reads WHPKAEMRPSFSELVSRISAIFSTFIGEHYVHVNATYVNV. Residues tyrosine 1349 and tyrosine 1356 each carry the phosphotyrosine; by autocatalysis modification. Tyrosine 1365 bears the Phosphotyrosine mark.

Belongs to the protein kinase superfamily. Tyr protein kinase family. Heterodimer made of an alpha chain (50 kDa) and a beta chain (145 kDa) which are disulfide linked. Binds PLXNB1. Interacts when phosphorylated with downstream effectors including STAT3, PIK3R1, SRC, PCLG1, GRB2 and GAB1. Interacts with SPSB1, SPSB2 and SPSB4. Interacts with INPP5D/SHIP1. When phosphorylated at Tyr-1356, interacts with INPPL1/SHIP2. Interacts with RANBP9 and RANBP10, as well as SPSB1, SPSB2, SPSB3 and SPSB4. SPSB1 binding occurs in the presence and in the absence of HGF, however HGF treatment has a positive effect on this interaction. Interacts with MUC20; prevents interaction with GRB2 and suppresses hepatocyte growth factor-induced cell proliferation. Interacts with GRB10. Interacts with PTPN1 and PTPN2. Interacts with LECT2; this interaction may have an antagonistic effect on receptor activation. Interacts with HSP90AA1 and HSP90AB1; the interaction suppresses MET kinase activity. Interacts with tensin TNS3. Interacts (when phosphorylated) with tensin TNS4 (via SH2 domain); the interaction increases MET protein stability by inhibiting MET endocytosis and subsequent lysosomal degradation. In terms of assembly, (Microbial infection) Interacts via extracytoplasmic residues 25-656 with L.monocytogenes InlB; MET can bind HGF, its endogenous ligand, and InlB simultaneously. InlB probably dimerizes upon binding to MET, which encourages subsequent dimerization of MET. Post-translationally, autophosphorylated in response to ligand binding on Tyr-1234 and Tyr-1235 in the kinase domain leading to further phosphorylation of Tyr-1349 and Tyr-1356 in the C-terminal multifunctional docking site. Dephosphorylated by PTPRJ at Tyr-1349 and Tyr-1365. Dephosphorylated by PTPN1 and PTPN2. In terms of processing, ubiquitinated. Ubiquitination by CBL regulates MET endocytosis, resulting in decreasing plasma membrane receptor abundance, and in endosomal degradation and/or recycling of internalized receptors. O-mannosylation of IPT/TIG domains by TMEM260 is required for protein maturation. O-mannosylated residues are composed of single mannose glycans that are not elongated or modified. Post-translationally, (Microbial infection) Tyrosine phosphorylation is stimulated by L.monocytogenes InlB. Tyrosine phosphorylation is maximal 10-20 minutes after treatment with InlB and disappears by 60 minutes. The phosphorylated residues were not identified. In terms of tissue distribution, expressed in normal hepatocytes as well as in epithelial cells lining the stomach, the small and the large intestine. Found also in basal keratinocytes of esophagus and skin. High levels are found in liver, gastrointestinal tract, thyroid and kidney. Also present in the brain. Expressed in metaphyseal bone (at protein level).

Its subcellular location is the membrane. The protein resides in the secreted. The catalysed reaction is L-tyrosyl-[protein] + ATP = O-phospho-L-tyrosyl-[protein] + ADP + H(+). In its inactive state, the C-terminal tail interacts with the catalytic domain and inhibits the kinase activity. Upon ligand binding, the C-terminal tail is displaced and becomes phosphorylated, thus increasing the kinase activity. Receptor tyrosine kinase that transduces signals from the extracellular matrix into the cytoplasm by binding to hepatocyte growth factor/HGF ligand. Regulates many physiological processes including proliferation, scattering, morphogenesis and survival. Ligand binding at the cell surface induces autophosphorylation of MET on its intracellular domain that provides docking sites for downstream signaling molecules. Following activation by ligand, interacts with the PI3-kinase subunit PIK3R1, PLCG1, SRC, GRB2, STAT3 or the adapter GAB1. Recruitment of these downstream effectors by MET leads to the activation of several signaling cascades including the RAS-ERK, PI3 kinase-AKT, or PLCgamma-PKC. The RAS-ERK activation is associated with the morphogenetic effects while PI3K/AKT coordinates prosurvival effects. During embryonic development, MET signaling plays a role in gastrulation, development and migration of neuronal precursors, angiogenesis and kidney formation. During skeletal muscle development, it is crucial for the migration of muscle progenitor cells and for the proliferation of secondary myoblasts. In adults, participates in wound healing as well as organ regeneration and tissue remodeling. Also promotes differentiation and proliferation of hematopoietic cells. May regulate cortical bone osteogenesis. In terms of biological role, (Microbial infection) Acts as a receptor for Listeria monocytogenes internalin InlB, mediating entry of the pathogen into cells. This Homo sapiens (Human) protein is Hepatocyte growth factor receptor (MET).